Here is a 183-residue protein sequence, read N- to C-terminus: Ribosome-recycling factor (183 aa).

The protein belongs to the RRF family.

The protein resides in the cytoplasm. Functionally, responsible for the release of ribosomes from messenger RNA at the termination of protein biosynthesis. May increase the efficiency of translation by recycling ribosomes from one round of translation to another. The polypeptide is Ribosome-recycling factor (Deinococcus radiodurans (strain ATCC 13939 / DSM 20539 / JCM 16871 / CCUG 27074 / LMG 4051 / NBRC 15346 / NCIMB 9279 / VKM B-1422 / R1)).